We begin with the raw amino-acid sequence, 289 residues long: Bis(5'-nucleosyl)-tetraphosphatase, symmetrical (289 aa).

It belongs to the Ap4A hydrolase family.

It catalyses the reaction P(1),P(4)-bis(5'-adenosyl) tetraphosphate + H2O = 2 ADP + 2 H(+). Its function is as follows. Hydrolyzes diadenosine 5',5'''-P1,P4-tetraphosphate to yield ADP. The protein is Bis(5'-nucleosyl)-tetraphosphatase, symmetrical of Yersinia pestis bv. Antiqua (strain Antiqua).